A 231-amino-acid chain; its full sequence is Septum site-determining protein MinC (231 aa).

The protein belongs to the MinC family. As to quaternary structure, interacts with MinD and FtsZ.

Functionally, cell division inhibitor that blocks the formation of polar Z ring septums. Rapidly oscillates between the poles of the cell to destabilize FtsZ filaments that have formed before they mature into polar Z rings. Prevents FtsZ polymerization. This is Septum site-determining protein MinC from Shigella flexneri.